A 360-amino-acid chain; its full sequence is Ribosomal RNA large subunit methyltransferase M (360 aa).

S-adenosyl-L-methionine is bound by residues Ser-187, 220-223 (CPGG), Asp-239, Asp-259, and Asp-276. Lys-305 (proton acceptor) is an active-site residue.

The protein belongs to the class I-like SAM-binding methyltransferase superfamily. RNA methyltransferase RlmE family. RlmM subfamily. Monomer.

It localises to the cytoplasm. It carries out the reaction cytidine(2498) in 23S rRNA + S-adenosyl-L-methionine = 2'-O-methylcytidine(2498) in 23S rRNA + S-adenosyl-L-homocysteine + H(+). In terms of biological role, catalyzes the 2'-O-methylation at nucleotide C2498 in 23S rRNA. The chain is Ribosomal RNA large subunit methyltransferase M from Shewanella sediminis (strain HAW-EB3).